The following is a 316-amino-acid chain: uncharacterized protein (316 aa).

A disordered region spans residues alanine 285 to glycine 316. The span at aspartate 289–proline 298 shows a compositional bias: acidic residues.

In terms of biological role, possibly necessary for replication. This is an uncharacterized protein from Halobacterium salinarum (Halobacterium halobium).